The sequence spans 417 residues: Tyrosine--tRNA ligase (417 aa).

Tyr-36 is an L-tyrosine binding site. The 'HIGH' region signature appears at 41 to 50 (PTADSLHIGH). Residues Tyr-170 and Gln-174 each coordinate L-tyrosine. Positions 231 to 235 (KFGKS) match the 'KMSKS' region motif. Lys-234 is an ATP binding site. Residues 351 to 417 (TNLVELLIEA…GKKKYFMIIH (67 aa)) enclose the S4 RNA-binding domain.

Belongs to the class-I aminoacyl-tRNA synthetase family. TyrS type 1 subfamily. In terms of assembly, homodimer.

The protein resides in the cytoplasm. It carries out the reaction tRNA(Tyr) + L-tyrosine + ATP = L-tyrosyl-tRNA(Tyr) + AMP + diphosphate + H(+). Catalyzes the attachment of tyrosine to tRNA(Tyr) in a two-step reaction: tyrosine is first activated by ATP to form Tyr-AMP and then transferred to the acceptor end of tRNA(Tyr). In Macrococcus caseolyticus (strain JCSC5402) (Macrococcoides caseolyticum), this protein is Tyrosine--tRNA ligase.